The following is a 334-amino-acid chain: Holliday junction branch migration complex subunit RuvB (334 aa).

Positions 4-184 (ADRLISAAVI…FGIVQRLEFY (181 aa)) are large ATPase domain (RuvB-L). ATP contacts are provided by residues I23, R24, G65, K68, T69, T70, 131–133 (EDY), R174, Y184, and R221. Residue T69 participates in Mg(2+) binding. The segment at 185-255 (PVADLEHIVS…VAMKALDMLN (71 aa)) is small ATPAse domain (RuvB-S). The interval 258–334 (AEGFDFMDRK…YKHFGITREE (77 aa)) is head domain (RuvB-H). DNA is bound by residues R294, R313, and R318.

The protein belongs to the RuvB family. As to quaternary structure, homohexamer. Forms an RuvA(8)-RuvB(12)-Holliday junction (HJ) complex. HJ DNA is sandwiched between 2 RuvA tetramers; dsDNA enters through RuvA and exits via RuvB. An RuvB hexamer assembles on each DNA strand where it exits the tetramer. Each RuvB hexamer is contacted by two RuvA subunits (via domain III) on 2 adjacent RuvB subunits; this complex drives branch migration. In the full resolvosome a probable DNA-RuvA(4)-RuvB(12)-RuvC(2) complex forms which resolves the HJ.

The protein localises to the cytoplasm. The enzyme catalyses ATP + H2O = ADP + phosphate + H(+). Its function is as follows. The RuvA-RuvB-RuvC complex processes Holliday junction (HJ) DNA during genetic recombination and DNA repair, while the RuvA-RuvB complex plays an important role in the rescue of blocked DNA replication forks via replication fork reversal (RFR). RuvA specifically binds to HJ cruciform DNA, conferring on it an open structure. The RuvB hexamer acts as an ATP-dependent pump, pulling dsDNA into and through the RuvAB complex. RuvB forms 2 homohexamers on either side of HJ DNA bound by 1 or 2 RuvA tetramers; 4 subunits per hexamer contact DNA at a time. Coordinated motions by a converter formed by DNA-disengaged RuvB subunits stimulates ATP hydrolysis and nucleotide exchange. Immobilization of the converter enables RuvB to convert the ATP-contained energy into a lever motion, pulling 2 nucleotides of DNA out of the RuvA tetramer per ATP hydrolyzed, thus driving DNA branch migration. The RuvB motors rotate together with the DNA substrate, which together with the progressing nucleotide cycle form the mechanistic basis for DNA recombination by continuous HJ branch migration. Branch migration allows RuvC to scan DNA until it finds its consensus sequence, where it cleaves and resolves cruciform DNA. The chain is Holliday junction branch migration complex subunit RuvB from Yersinia pestis bv. Antiqua (strain Angola).